Here is a 1088-residue protein sequence, read N- to C-terminus: MNTGGRLIAGSHNRNEFVLINADDTARIRSAEELSGQTCKICRDEIELTDNGEPFIACNECAFPTCRPCYEYERREGNQACPQCGTRYKRIKGSPRVEGDEEDDDIDDLEHEFYGMDPEHVTEAALYYMRLNTGRGTDEVSHLYSASPGSEVPLLTYCDEDSDMYSDRHALIVPPSTGLGNRVHHVPFTDSFASIHTRPMVPQKDLTVYGYGSVAWKDRMEVWKKQQIEKLQVVKNERVNDGDGDGFIVDELDDPGLPMMDEGRQPLSRKLPIRSSRINPYRMLIFCRLAILGLFFHYRILHPVNDAFGLWLTSVICEIWFAVSWILDQFPKWYPIERETYLDRLSLRYEKEGKPSELAPVDVFVSTVDPLKEPPLITANTVLSILAVDYPVEKVACYVSDDGAAMLTFEALSYTAEFARKWVPFCKKFSIEPRAPEWYFSQKMDYLKHKVDPAFVMERRAMKRDYEEFKVKINALVSVSQKVPEDGWTMQDGTPWPGNNVRDHPGMIQVFLGHSGVCDMDGNELPRLVYVSREKRPGFDHHKKAGAMNSLIRVSAVLSNAPYLLNVDCDHYINNSKAIREAMCFMMDPQSGKKICYVQFPQRFDGIDRHDRYSNRNVVFFDINMKGLDGIQGPIYVGTGCVFRRQALYGFDAPKKKQPPGRTCNCWPKWCCLCCGMRKKKTGKVKDNQRKKPKETSKQIHALEHIEEGLQVTNAENNSETAQLKLEKKFGQSPVLVASTLLLNGGVPSNVNPASLLRESIQVISCGYEEKTEWGKEIGWIYGSVTEDILTGFKMHCHGWRSVYCMPKRAAFKGSAPINLSDRLHQVLRWALGSVEIFLSRHCPIWYGYGGGLKWLERFSYINSVVYPWTSLPLLVYCSLPAICLLTGKFIVPEISNYAGILFLLMFMSIAVTGILEMQWGKIGIDDWWRNEQFWVIGGVSSHLFALFQGLLKVLAGVSTNFTVTSKAADDGEFSELYIFKWTSLLIPPTTLLIINIVGVIVGVSDAINNGYDSWGPLFGRLFFALWVIVHLYPFLKGLLGKQDRVPTIILVWSILLASILTLLWVRVNPFVSKDGPVLEICGLDCLK.

The residue at position 1 (Met1) is an N-acetylmethionine. Residues Met1–Met283 are Cytoplasmic-facing. Zn(2+) contacts are provided by Cys39, Cys42, Cys58, Cys61, Cys66, Cys69, Cys81, and Cys84. An RING-type; degenerate zinc finger spans residues Cys39 to Gly85. A helical membrane pass occupies residues Leu284–Val304. At Asn305–Asp306 the chain is on the extracellular side. A helical transmembrane segment spans residues Ala307–Leu327. Topologically, residues Asp328–Ser871 are cytoplasmic. Positions 366, 372, 373, 402, and 543 each coordinate UDP-alpha-D-glucose. Asp402 is an active-site residue. Residues Lys544 and Asp568 each contribute to the Mn(2+) site. Residue Asp788 is part of the active site. Residues Leu872–Val892 form a helical membrane-spanning segment. The Extracellular portion of the chain corresponds to Pro893–Asn897. A helical membrane pass occupies residues Tyr898–Met918. Residues Gln919–Gln933 are Cytoplasmic-facing. Residues Phe934 to Val954 form a helical membrane-spanning segment. Over Leu955 to Thr983 the chain is Extracellular. Asn961 carries an N-linked (GlcNAc...) asparagine glycan. The chain crosses the membrane as a helical span at residues Ser984–Val1004. Over Ser1005–Trp1015 the chain is Cytoplasmic. The chain crosses the membrane as a helical span at residues Gly1016–Leu1036. Over Lys1037–Arg1045 the chain is Extracellular. The chain crosses the membrane as a helical span at residues Val1046–Val1066. Over Arg1067–Lys1088 the chain is Cytoplasmic.

This sequence belongs to the glycosyltransferase 2 family. Plant cellulose synthase subfamily. Mn(2+) is required as a cofactor. The cofactor is Zn(2+). As to expression, expressed in young plants, stems and flowers.

Its subcellular location is the cell membrane. It catalyses the reaction [(1-&gt;4)-beta-D-glucosyl](n) + UDP-alpha-D-glucose = [(1-&gt;4)-beta-D-glucosyl](n+1) + UDP + H(+). Its pathway is glycan metabolism; plant cellulose biosynthesis. Probable catalytic subunit of cellulose synthase terminal complexes ('rosettes'), required for beta-1,4-glucan microfibril crystallization, a major mechanism of the cell wall formation. The protein is Probable cellulose synthase A catalytic subunit 9 [UDP-forming] of Arabidopsis thaliana (Mouse-ear cress).